Here is a 993-residue protein sequence, read N- to C-terminus: Glycine dehydrogenase (decarboxylating) (993 aa).

Lys-715 bears the N6-(pyridoxal phosphate)lysine mark.

Belongs to the GcvP family. The glycine cleavage system is composed of four proteins: P, T, L and H. Pyridoxal 5'-phosphate is required as a cofactor.

It carries out the reaction N(6)-[(R)-lipoyl]-L-lysyl-[glycine-cleavage complex H protein] + glycine + H(+) = N(6)-[(R)-S(8)-aminomethyldihydrolipoyl]-L-lysyl-[glycine-cleavage complex H protein] + CO2. The glycine cleavage system catalyzes the degradation of glycine. The P protein binds the alpha-amino group of glycine through its pyridoxal phosphate cofactor; CO(2) is released and the remaining methylamine moiety is then transferred to the lipoamide cofactor of the H protein. The sequence is that of Glycine dehydrogenase (decarboxylating) from Xylella fastidiosa (strain Temecula1 / ATCC 700964).